Reading from the N-terminus, the 288-residue chain is Acidic endochitinase SP2 (288 aa).

The N-terminal stretch at methionine 1–alanine 27 is a signal peptide. A Pyrrolidone carboxylic acid modification is found at glutamine 28. Residues glutamine 28–glycine 63 enclose the Chitin-binding type-1 domain. Disulfide bonds link cysteine 30–cysteine 38, cysteine 32–cysteine 44, cysteine 37–cysteine 51, and cysteine 56–cysteine 61. Residues glycine 64 to proline 78 show a composition bias toward low complexity. The segment at glycine 64–glycine 84 is disordered. The segment at glycine 64–serine 85 is hinge region (Gly/Pro/Thr-rich). 4-hydroxyproline is present on residues proline 66, proline 69, proline 72, and proline 75. Repeat copies occupy residues threonine 67 to proline 69, threonine 70 to proline 72, threonine 73 to proline 75, and threonine 76 to proline 78. The tract at residues threonine 67–proline 78 is 4 X 3 AA tandem repeats of T-T-P. Positions serine 86 to cysteine 288 are catalytic. 3 cysteine pairs are disulfide-bonded: cysteine 107–cysteine 154, cysteine 168–cysteine 178, and cysteine 256–cysteine 288. Glutamate 149 functions as the Proton donor in the catalytic mechanism.

Belongs to the glycosyl hydrolase 19 family. Chitinase class I subfamily. Post-translationally, O-glycosylated on hydroxyprolines; contains xylose. In terms of tissue distribution, localized to infected area.

Its subcellular location is the secreted. The protein resides in the extracellular space. The enzyme catalyses Random endo-hydrolysis of N-acetyl-beta-D-glucosaminide (1-&gt;4)-beta-linkages in chitin and chitodextrins.. Its function is as follows. Defense against chitin-containing fungal pathogens. This chain is Acidic endochitinase SP2 (SP2), found in Beta vulgaris (Sugar beet).